A 465-amino-acid polypeptide reads, in one-letter code: Glucose-1-phosphate adenylyltransferase (465 aa).

Alpha-D-glucose 1-phosphate contacts are provided by residues Gly-164, 181–182 (EK), and Ser-199.

This sequence belongs to the bacterial/plant glucose-1-phosphate adenylyltransferase family. In terms of assembly, homotetramer.

The catalysed reaction is alpha-D-glucose 1-phosphate + ATP + H(+) = ADP-alpha-D-glucose + diphosphate. Its pathway is glycan biosynthesis; glycogen biosynthesis. Functionally, involved in the biosynthesis of ADP-glucose, a building block required for the elongation reactions to produce glycogen. Catalyzes the reaction between ATP and alpha-D-glucose 1-phosphate (G1P) to produce pyrophosphate and ADP-Glc. The chain is Glucose-1-phosphate adenylyltransferase from Arthrobacter sp. (strain FB24).